A 145-amino-acid polypeptide reads, in one-letter code: UPF0201 protein LS215_1276 (145 aa).

This sequence belongs to the UPF0201 family.

The sequence is that of UPF0201 protein LS215_1276 from Saccharolobus islandicus (strain L.S.2.15 / Lassen #1) (Sulfolobus islandicus).